Reading from the N-terminus, the 142-residue chain is Hemoglobin subunit alpha-A (142 aa).

The Globin domain maps to 2-142 (VLSANDKTNV…VGNVLTAKYR (141 aa)). His-59 lines the O2 pocket. His-88 contacts heme b.

Belongs to the globin family. Heterotetramer of two alpha chains and two beta chains. In terms of tissue distribution, red blood cells.

Functionally, involved in oxygen transport from the lung to the various peripheral tissues. This is Hemoglobin subunit alpha-A (HBAA) from Aquila chrysaetos (Golden eagle).